A 43-amino-acid chain; its full sequence is Large ribosomal subunit protein bL32 (43 aa).

It belongs to the bacterial ribosomal protein bL32 family.

This chain is Large ribosomal subunit protein bL32 (rpmF), found in Carsonella ruddii (strain PV).